Consider the following 324-residue polypeptide: Carbonic anhydrase, chloroplastic (324 aa).

It belongs to the beta-class carbonic anhydrase family. As to quaternary structure, homohexamer.

Its subcellular location is the plastid. The protein resides in the chloroplast stroma. It carries out the reaction hydrogencarbonate + H(+) = CO2 + H2O. Its function is as follows. Reversible hydration of carbon dioxide. This Hordeum vulgare (Barley) protein is Carbonic anhydrase, chloroplastic.